We begin with the raw amino-acid sequence, 328 residues long: MIFSILEHILTHISFSVVLIVMTIYFLTLLVNLDESIGFYDSSDKGIVITFFSITGFLFTRWIYSGHFPLSNLYESLIFLSWAFSIIHMVSYFNKKKKNNLNAITAPSAIFIQGFATSGLLNKMPQSAILVPALQSQWLMMHVSMMVLGYGALLCGSLLSIALLVITFRKVGPFFYKKNKKKTKLLTDFFSFGVLYYINERNSIFLRQNINLSFSRNYYRYQLIEQLDYWSYRIISLGFLFLTMGILSGAVWANETWGSYWNWDPKETWAFITWTIFAIYLHIKTKKNGRGINSAIVASIGFLVIWICYFGVNLLGIGLHSYGSFTSN.

8 helical membrane-spanning segments follow: residues 13–33 (ISFS…LVNL), 46–66 (GIVI…IYSG), 73–93 (LYES…VSYF), 101–121 (LNAI…SGLL), 146–166 (MVLG…LLVI), 234–254 (IISL…VWAN), 263–283 (WDPK…YLHI), and 295–315 (AIVA…VNLL).

The protein belongs to the CcmF/CycK/Ccl1/NrfE/CcsA family. May interact with Ccs1.

The protein resides in the plastid. It localises to the chloroplast thylakoid membrane. In terms of biological role, required during biogenesis of c-type cytochromes (cytochrome c6 and cytochrome f) at the step of heme attachment. The protein is Cytochrome c biogenesis protein CcsA of Aethionema cordifolium (Lebanon stonecress).